The following is a 252-amino-acid chain: Isoprenyl transferase (252 aa).

Residue Asp-32 is part of the active site. Asp-32 lines the Mg(2+) pocket. Substrate is bound by residues 33–36 (GNGR), Trp-37, Arg-45, His-49, and 77–79 (STE). The active-site Proton acceptor is Asn-80. Residues Trp-81, Arg-83, Arg-200, and 206–208 (RLS) each bind substrate. Glu-219 lines the Mg(2+) pocket.

Belongs to the UPP synthase family. As to quaternary structure, homodimer. Requires Mg(2+) as cofactor.

Its function is as follows. Catalyzes the condensation of isopentenyl diphosphate (IPP) with allylic pyrophosphates generating different type of terpenoids. This is Isoprenyl transferase from Listeria innocua serovar 6a (strain ATCC BAA-680 / CLIP 11262).